Here is a 95-residue protein sequence, read N- to C-terminus: Acylphosphatase (95 aa).

Residues 7-94 (AALVRITGRV…EAPAGFRITR (88 aa)) form the Acylphosphatase-like domain. Active-site residues include Arg22 and Asn40. Residues 76 to 88 (VASEEASSAEAPA) show a composition bias toward low complexity. The interval 76 to 95 (VASEEASSAEAPAGFRITRG) is disordered.

It belongs to the acylphosphatase family.

The enzyme catalyses an acyl phosphate + H2O = a carboxylate + phosphate + H(+). The polypeptide is Acylphosphatase (acyP) (Rhizobium meliloti (strain 1021) (Ensifer meliloti)).